Reading from the N-terminus, the 952-residue chain is MKLPGQGDFESSDAHENAHSEEPDSGLGPGPGLNGPSGIDIGESQVSKDPLLFIQLNELLGWPQALEWRETGRWLLFEEKLDMGAGRWSAPHVPTLELPSLQKLRSLLAEGIVLLDCQAQSLLELVEQVVSGESLSPELRGQLQALLLQRPQHHIQTMGIRPCRESNAFRKASRDEDAPLKHQNPLRQKLPAGAEAAAVLAGELGFLEQPLGAFVRLRNPIVLEPLTEMILPSRFFCLLLGPPTLGRSYHEMGRAAAVLLSDPQFQWSVRRASHLPDLLAALDAFLQEVTALPPGRWDRTARIPPPKYLPSQHKRFPSKLQEVTSLSRQSAALAEDKHHHGPHTPIPELQRTGRLFGGLIQDVRRKACWYTSDFLDALHPQCFSAVFYIYLATVTNAITFGGLLGDATEGAQGVLESFLGTAVAGAAFCLMAGQPLTILSSTGPVLVFERLLFSFSRDYSLDYLPFRLWVGIWVTAFCLALVATEASLLVRYFTRFTEEGFCALISLIFIYDAMGKMLNLIRAYPIQRPGSSAYGCFCQYPGTGGNTSEWTSAKLKDTEDILSVPGLVNASFLPPPECIRQGGHPLGPSCHTVPDIAFFSLLLFFTSFLCAIALKHIKNSRFFPSVVRKVLGDFSSVLAILLGCGLDTFLGLATPKLLVPTEFKPTLSGRGWLVSPFGANPWWLSVAAALPALLLSILIFMDQQITAVILNRAEYRLQKGAGFHLDLFCVAVLMLFTSALGLPWYVSATVISLAHIDSLRRESKACIPGEAPNFLGIREQRLTGLVVFVLTGVSIFLAPVLKFIPMPVLYGIFLYMGVAALSSIQFVKRVQLLLMPRKHQPDMLLLRHVPLSRVHLFTAIQLACLGLLWVVKSTPAAIVFPLMLLGLVAIRKALEWVFSPQELLWLDELMPEEEETIPENRSEPEHLFSGNDSEDSELMYQPKAPEINISVN.

Positions 1 to 41 (MKLPGQGDFESSDAHENAHSEEPDSGLGPGPGLNGPSGIDI) are disordered. Positions 12–22 (SDAHENAHSEE) are enriched in basic and acidic residues. A run of 4 helical transmembrane segments spans residues 385-405 (AVFY…GLLG), 413-433 (GVLE…LMAG), 470-490 (VGIW…SLLV), and 501-521 (FCAL…LNLI). N-linked (GlcNAc...) asparagine glycans are attached at residues asparagine 546 and asparagine 569. 7 helical membrane-spanning segments follow: residues 593 to 613 (VPDI…CAIA), 634 to 654 (FSSV…GLAT), 681 to 701 (PWWL…LIFM), 727 to 747 (LFCV…WYVS), 784 to 804 (GLVV…LKFI), 807 to 827 (PVLY…IQFV), and 870 to 890 (VVKS…LVAI). The tract at residues 915–938 (ETIPENRSEPEHLFSGNDSEDSEL) is disordered. Residues asparagine 920, asparagine 931, and asparagine 948 are each glycosylated (N-linked (GlcNAc...) asparagine).

This sequence belongs to the anion exchanger (TC 2.A.31) family. As to expression, expressed in submandibular gland (SMG) duct and cortical collecting duct (CCD) of kidney. Lower expressed in duodenal villi.

Its subcellular location is the basolateral cell membrane. It carries out the reaction 2 hydrogencarbonate(out) + chloride(in) + Na(+)(out) = 2 hydrogencarbonate(in) + chloride(out) + Na(+)(in). The catalysed reaction is K(+)(in) + 2 hydrogencarbonate(in) + chloride(out) = K(+)(out) + 2 hydrogencarbonate(out) + chloride(in). The enzyme catalyses Li(+)(in) + 2 hydrogencarbonate(in) + chloride(out) = Li(+)(out) + 2 hydrogencarbonate(out) + chloride(in). It catalyses the reaction Rb(+)(in) + 2 hydrogencarbonate(in) + chloride(out) = Rb(+)(out) + 2 hydrogencarbonate(out) + chloride(in). It carries out the reaction Cs(+)(in) + 2 hydrogencarbonate(in) + chloride(out) = Cs(+)(out) + 2 hydrogencarbonate(out) + chloride(in). With respect to regulation, cl(-)/HCO3(-) exchanger activity is substantially increased in response to 5 uM isoproterenol. Cl(-)/HCO3(-) exchanger activity is increased by both forskolin and coexpression with the catalytic subunit alpha of PKA. Its function is as follows. Electroneutral Cl(-)/HCO3(-) antiporter that favors chloride ion entry and efflux of hydrogencarbonate and sodium ion across the basolateral membrane and may participate in salivary secretion. Also mediates Cl(-)/HCO3(-) exchange activity in the presence of K(+) as well as Cs(+), Li(+), and Rb(+). Does not contribute to Cl(-)/HCO3(-) exchanger in the apical membrane of the upper villous epithelium. In Mus musculus (Mouse), this protein is Anion exchange protein 4.